An 872-amino-acid chain; its full sequence is UPF0182 protein Noc_0961 (872 aa).

Transmembrane regions (helical) follow at residues 8–28 (FLIL…AGFE), 56–76 (LVVF…NFWV), 109–129 (SLWI…WPLF), 159–179 (LFSF…FLLL), 207–227 (WHLS…FFLQ), 254–274 (PFIW…LLFI), and 282–302 (TLAV…FHFL).

Belongs to the UPF0182 family.

It localises to the cell membrane. The protein is UPF0182 protein Noc_0961 of Nitrosococcus oceani (strain ATCC 19707 / BCRC 17464 / JCM 30415 / NCIMB 11848 / C-107).